Consider the following 536-residue polypeptide: Probable E3 ubiquitin-protein ligase ARI13 (536 aa).

Positions 83 to 328 are TRIAD supradomain; it reads KISSCGICFK…GFYKFCNVSM (246 aa). The Zn(2+) site is built by C87, C90, C106, H108, C111, C114, C135, C140, C180, C185, C210, C212, C217, C220, H225, C230, C277, C280, C297, C299, C304, C307, H314, and C324. The RING-type 1 zinc finger occupies 87–140; that stretch reads CGICFKTCDDGDYLISTPFCSHMFCKSCWRKYLEKNFYLVEKTQTRISCPHGAC. An IBR-type zinc finger spans residues 158–230; it reads EMYVEYILRS…MLESHKPVTC (73 aa). The RING-type 2; atypical zinc-finger motif lies at 277–307; the sequence is CPHCLRPADLGTKQYLRFLTCACNGRFCWKC. The RanBP2-type zinc finger occupies 495–526; the sequence is DYGGLFWLCDRCTYGNTWFHKECLMCSDDIAA.

Belongs to the RBR family. Ariadne subfamily. Requires Zn(2+) as cofactor.

The catalysed reaction is [E2 ubiquitin-conjugating enzyme]-S-ubiquitinyl-L-cysteine + [acceptor protein]-L-lysine = [E2 ubiquitin-conjugating enzyme]-L-cysteine + [acceptor protein]-N(6)-ubiquitinyl-L-lysine.. It participates in protein modification; protein ubiquitination. Its function is as follows. Might act as an E3 ubiquitin-protein ligase, or as part of E3 complex, which accepts ubiquitin from specific E2 ubiquitin-conjugating enzymes and then transfers it to substrates. In Arabidopsis thaliana (Mouse-ear cress), this protein is Probable E3 ubiquitin-protein ligase ARI13 (ARI13).